A 445-amino-acid polypeptide reads, in one-letter code: ATP-dependent rRNA helicase rrp3 (445 aa).

Positions Met-1–Ser-10 are enriched in basic and acidic residues. The tract at residues Met-1 to Lys-28 is disordered. Residues Asp-17–Lys-28 are compositionally biased toward low complexity. Residues Lys-28–Glu-56 carry the Q motif motif. In terms of domain architecture, Helicase ATP-binding spans Ile-59–Val-229. Ala-72–Thr-79 contributes to the ATP binding site. Positions Asp-178–Asp-181 match the DEAD box motif. Positions Lys-240–Met-400 constitute a Helicase C-terminal domain. The segment at Leu-415–Gly-445 is disordered.

The protein belongs to the DEAD box helicase family. DDX47/RRP3 subfamily. As to quaternary structure, interacts with the SSU processome.

It is found in the nucleus. It carries out the reaction ATP + H2O = ADP + phosphate + H(+). Its function is as follows. ATP-dependent rRNA helicase required for pre-ribosomal RNA processing. Involved in the maturation of the 35S-pre-rRNA and to its cleavage to mature 18S rRNA. This chain is ATP-dependent rRNA helicase rrp3, found in Aspergillus terreus (strain NIH 2624 / FGSC A1156).